A 441-amino-acid chain; its full sequence is Putative F-box protein At1g33530 (441 aa).

Positions 91-137 (TTLAVELPDVLVEEILQRLPVKYLVRLKSISKGWKSLIESDHLAEKH) constitute an F-box domain.

The sequence is that of Putative F-box protein At1g33530 from Arabidopsis thaliana (Mouse-ear cress).